A 322-amino-acid polypeptide reads, in one-letter code: CPX chromosomal region candidate gene 1 protein homolog (322 aa).

Composition is skewed to polar residues over residues 1-23 (MTSS…NETP) and 37-78 (TNIS…TQND). The interval 1 to 83 (MTSSNQGNDP…MTQNDPPDEE (83 aa)) is disordered.

The sequence is that of CPX chromosomal region candidate gene 1 protein homolog (Cpxcr1) from Mus musculus (Mouse).